The primary structure comprises 359 residues: sn-1 acyl-lipid omega-3 desaturase (ferredoxin) (359 aa).

The span at 1–15 (MQLDTISFNNPLNSE) shows a compositional bias: polar residues. The tract at residues 1-20 (MQLDTISFNNPLNSETSEDT) is disordered. The next 2 membrane-spanning stretches (helical) occupy residues 47 to 67 (LFYF…ASYL) and 70 to 90 (WLFF…LFVV). A Histidine box-1 motif is present at residues 92–96 (HDCGH). Residues 128–132 (HRTHH) carry the Histidine box-2 motif. The next 2 helical transmembrane spans lie at 207–227 (VLLI…GWMW) and 228–248 (LLKY…LVTF). Residues 294 to 298 (HHIFL) carry the Histidine box-3 motif.

The protein belongs to the fatty acid desaturase type 2 family. Requires Fe(2+) as cofactor.

It is found in the membrane. It carries out the reaction a 1-[(9Z,12Z)-octadecdienoyl]-2-acyl-glycerolipid + 2 reduced [2Fe-2S]-[ferredoxin] + O2 + 2 H(+) = a 1-[(9Z,12Z,15Z)-octadectrienoyl]-2-acyl-glycerolipid + 2 oxidized [2Fe-2S]-[ferredoxin] + 2 H2O. The enzyme catalyses a 1-[(6Z,9Z,12Z)-octadectrienoyl]-2-acyl-glycerolipid + 2 reduced [2Fe-2S]-[ferredoxin] + O2 + 2 H(+) = a 1-[(6Z,9Z,12Z,15Z)-octadectetraenoyl]-2-acyl-glycerolipid + 2 oxidized [2Fe-2S]-[ferredoxin] + 2 H2O. The protein operates within lipid metabolism; polyunsaturated fatty acid biosynthesis. Its function is as follows. Desaturase involved in fatty acid biosynthesis. Introduces a double bond at carbon 15 of linoleoyl and gamma-linolenoyl groups attached to the sn-1 position of the glycerol moiety of membrane glycerolipids. This chain is sn-1 acyl-lipid omega-3 desaturase (ferredoxin), found in Nostoc sp. (strain 36).